Consider the following 515-residue polypeptide: Protein pid-4 (515 aa).

The segment at 496–515 (DRSPQKFKFPASGSYMKPAN) is disordered.

May interact with pid-2, app-1 and prmt-5.

It localises to the cytoplasm. It is found in the perinuclear region. The protein localises to the P-body. Functionally, together with pid-5, it is involved in gene silencing mediated by a class of 21 nucleotide PIWI-interacting RNAs (piRNAs) that possess a uracil residue at the 5'-end (also called 21U-RNAs) and guide the Piwi protein prg-1 to its DNA targets for silencing. Together with pid-5, it is required for the biogenesis of secondary and tertiary 22G-siRNAs. Specifically, promotes the production of 22G-siRNAs from the 5' end of target mRNAs. Together with pid-5, plays a role in small RNA-directed transgenerational epigenetic inheritance (also called RNAe) over several generations and germline immortality. Together with pid-5, plays a role in the formation of liquid-like condensates in the cytoplasm called Z granules. The chain is Protein pid-4 from Caenorhabditis elegans.